Reading from the N-terminus, the 379-residue chain is Pre-mRNA-processing protein 45 (379 aa).

A compositionally biased stretch (pro residues) spans 1 to 10; the sequence is MFSNRLPPPK. 2 disordered regions span residues 1-22 and 353-379; these read MFSN…ALSS and SEGA…NYGA. Residues 368–379 show a composition bias toward basic and acidic residues; it reads AESDDKSDNYGA.

Belongs to the SNW family. Belongs to the CWC complex (or CEF1-associated complex), a spliceosome sub-complex reminiscent of a late-stage spliceosome composed of the U2, U5 and U6 snRNAs and at least BUD13, BUD31, BRR2, CDC40, CEF1, CLF1, CUS1, CWC2, CWC15, CWC21, CWC22, CWC23, CWC24, CWC25, CWC27, ECM2, HSH155, IST3, ISY1, LEA1, MSL1, NTC20, PRP8, PRP9, PRP11, PRP19, PRP21, PRP22, PRP45, PRP46, SLU7, SMB1, SMD1, SMD2, SMD3, SMX2, SMX3, SNT309, SNU114, SPP2, SYF1, SYF2, RSE1 and YJU2. Interacts with CLF1, PRP22 and PRP46. Interacts with SPP382.

The protein resides in the nucleus. Functionally, involved in pre-mRNA splicing. Associated with the spliceosome throughout the splicing reactions, until after the second catalytic step. This chain is Pre-mRNA-processing protein 45 (PRP45), found in Saccharomyces cerevisiae (strain ATCC 204508 / S288c) (Baker's yeast).